A 72-amino-acid polypeptide reads, in one-letter code: Phycobilisome 37.5 kDa linker polypeptide, phycocyanin-associated, rod (72 aa).

Residues 1 to 72 (MTSSAAAIRL…ASGNISVREF (72 aa)) enclose the PBS-linker domain.

The protein belongs to the phycobilisome linker protein family.

The protein resides in the cellular thylakoid membrane. In terms of biological role, rod linker protein, associated with phycocyanin. Linker polypeptides determine the state of aggregation and the location of the disk-shaped phycobiliprotein units within the phycobilisome and modulate their spectroscopic properties in order to mediate a directed and optimal energy transfer. This chain is Phycobilisome 37.5 kDa linker polypeptide, phycocyanin-associated, rod (cpcH2), found in Pseudanabaena tenuis (strain PCC 7409).